The primary structure comprises 399 residues: [Pyruvate dehydrogenase (acetyl-transferring)] kinase, mitochondrial (399 aa).

The transit peptide at 1–18 directs the protein to the mitochondrion; the sequence is MFLTRRLLGPFTSAIARK. The Histidine kinase domain maps to 123–360; sequence VVETMAEGLI…DAMIFLKAIP (238 aa). Residues 247 to 254, aspartate 286, 305 to 306, and 321 to 326 contribute to the ATP site; these read ELFKNSMR, ST, and GYGYGL.

Belongs to the PDK/BCKDK protein kinase family.

It is found in the mitochondrion matrix. It catalyses the reaction L-seryl-[pyruvate dehydrogenase E1 alpha subunit] + ATP = O-phospho-L-seryl-[pyruvate dehydrogenase E1 alpha subunit] + ADP + H(+). Its function is as follows. Inhibits the mitochondrial pyruvate dehydrogenase complex by phosphorylation of the E1 alpha subunit, thus contributing to the regulation of glucose metabolism. In Ascaris suum (Pig roundworm), this protein is [Pyruvate dehydrogenase (acetyl-transferring)] kinase, mitochondrial.